Consider the following 333-residue polypeptide: D-fructose 1,6-bisphosphatase class 2/sedoheptulose 1,7-bisphosphatase (333 aa).

Residues D33, E57, D85, and E88 each contribute to the Mn(2+) site. Residues 88–90 (EGT), Y119, 164–166 (RTR), and 186–188 (DGD) each bind substrate. E213 lines the Mn(2+) pocket.

It belongs to the FBPase class 2 family. In terms of assembly, homotetramer. Requires Mn(2+) as cofactor.

The enzyme catalyses beta-D-fructose 1,6-bisphosphate + H2O = beta-D-fructose 6-phosphate + phosphate. The catalysed reaction is D-sedoheptulose 1,7-bisphosphate + H2O = D-sedoheptulose 7-phosphate + phosphate. It participates in carbohydrate biosynthesis; Calvin cycle. Functionally, catalyzes the hydrolysis of fructose 1,6-bisphosphate (Fru 1,6-P2) and sedoheptulose 1,7-bisphosphate (Sed 1,7-P2) to fructose 6-phosphate and sedoheptulose 7-phosphate, respectively. The sequence is that of D-fructose 1,6-bisphosphatase class 2/sedoheptulose 1,7-bisphosphatase from Prochlorococcus marinus (strain MIT 9312).